Reading from the N-terminus, the 194-residue chain is FMN-dependent NADH:quinone oxidoreductase 1 (194 aa).

Residues Ser9 and 85–88 each bind FMN; that span reads MYNF.

It belongs to the azoreductase type 1 family. Homodimer. The cofactor is FMN.

It catalyses the reaction 2 a quinone + NADH + H(+) = 2 a 1,4-benzosemiquinone + NAD(+). It carries out the reaction N,N-dimethyl-1,4-phenylenediamine + anthranilate + 2 NAD(+) = 2-(4-dimethylaminophenyl)diazenylbenzoate + 2 NADH + 2 H(+). Functionally, quinone reductase that provides resistance to thiol-specific stress caused by electrophilic quinones. In terms of biological role, also exhibits azoreductase activity. Catalyzes the reductive cleavage of the azo bond in aromatic azo compounds to the corresponding amines. In Xanthomonas euvesicatoria pv. vesicatoria (strain 85-10) (Xanthomonas campestris pv. vesicatoria), this protein is FMN-dependent NADH:quinone oxidoreductase 1.